The primary structure comprises 396 residues: S-adenosylmethionine synthase 2 (396 aa).

E13 lines the Mg(2+) pocket. Residue H19 participates in ATP binding. E47 lines the K(+) pocket. L-methionine is bound by residues E60 and Q103. ATP is bound by residues D171–K173, S239–F242, D250, R256–K257, A273, K277, and K281. Residue D250 participates in L-methionine binding. K281 is an L-methionine binding site.

This sequence belongs to the AdoMet synthase family. As to quaternary structure, homotetramer. The cofactor is Mn(2+). It depends on Mg(2+) as a cofactor. Requires Co(2+) as cofactor. K(+) serves as cofactor. In terms of tissue distribution, expressed in roots, stems and leaves (at protein level).

It is found in the cytoplasm. It catalyses the reaction L-methionine + ATP + H2O = S-adenosyl-L-methionine + phosphate + diphosphate. It functions in the pathway amino-acid biosynthesis; S-adenosyl-L-methionine biosynthesis; S-adenosyl-L-methionine from L-methionine: step 1/1. Its function is as follows. Catalyzes the formation of S-adenosylmethionine from methionine and ATP. The reaction comprises two steps that are both catalyzed by the same enzyme: formation of S-adenosylmethionine (AdoMet) and triphosphate, and subsequent hydrolysis of the triphosphate. May be involved in the synthesis of betain in response to abiotic stress such as high salinity. The chain is S-adenosylmethionine synthase 2 (SAMS2) from Atriplex nummularia (Old man saltbush).